A 143-amino-acid chain; its full sequence is Cofilin (143 aa).

The ADF-H domain maps to 5 to 137; that stretch reads GVAVSDEALK…AYESVLEKIS (133 aa).

The protein belongs to the actin-binding proteins ADF family.

Its subcellular location is the cytoplasm. The protein localises to the cytoskeleton. It localises to the nucleus matrix. In terms of biological role, controls reversibly actin polymerization and depolymerization in a pH-sensitive manner. It has the ability to bind G- and F-actin in a 1:1 ratio of cofilin to actin. Binding to F-actin is regulated by tropomyosin. It is the major component of intranuclear and cytoplasmic actin rods. Required for accumulation of actin at the cell division site via depolymerizing actin at the cell ends. In association with myosin II has a role in the assembly of the contractile ring via severing actin filaments. Involved in the maintenance of the contractile ring once formed. In association with profilin and capping protein, has a role in the mitotic reorganization of the actin cytoskeleton. This chain is Cofilin (COF1), found in Ogataea parapolymorpha (strain ATCC 26012 / BCRC 20466 / JCM 22074 / NRRL Y-7560 / DL-1) (Yeast).